Here is a 343-residue protein sequence, read N- to C-terminus: Phosphate acyltransferase (343 aa).

It belongs to the PlsX family. As to quaternary structure, homodimer. Probably interacts with PlsY.

Its subcellular location is the cytoplasm. The catalysed reaction is a fatty acyl-[ACP] + phosphate = an acyl phosphate + holo-[ACP]. It participates in lipid metabolism; phospholipid metabolism. Catalyzes the reversible formation of acyl-phosphate (acyl-PO(4)) from acyl-[acyl-carrier-protein] (acyl-ACP). This enzyme utilizes acyl-ACP as fatty acyl donor, but not acyl-CoA. The protein is Phosphate acyltransferase of Coxiella burnetii (strain RSA 331 / Henzerling II).